The chain runs to 550 residues: CTP synthase (550 aa).

An amidoligase domain region spans residues 1 to 270 (MTKFVFVTGG…DRLICEELRL (270 aa)). Position 13 (serine 13) interacts with CTP. Serine 13 lines the UTP pocket. ATP is bound by residues 14–19 (SLGKGI) and aspartate 71. 2 residues coordinate Mg(2+): aspartate 71 and glutamate 144. Residues 151-153 (DIE), 191-196 (KTKPTQ), and lysine 227 each bind CTP. Residues 191–196 (KTKPTQ) and lysine 227 each bind UTP. The region spanning 295 to 547 (TIGMVGKYVD…VEAALASQQR (253 aa)) is the Glutamine amidotransferase type-1 domain. Position 356 (glycine 356) interacts with L-glutamine. The active-site Nucleophile; for glutamine hydrolysis is cysteine 383. Residues 384–387 (LGMQ), glutamate 407, and arginine 473 contribute to the L-glutamine site. Active-site residues include histidine 520 and glutamate 522.

This sequence belongs to the CTP synthase family. Homotetramer.

The catalysed reaction is UTP + L-glutamine + ATP + H2O = CTP + L-glutamate + ADP + phosphate + 2 H(+). The enzyme catalyses L-glutamine + H2O = L-glutamate + NH4(+). It catalyses the reaction UTP + NH4(+) + ATP = CTP + ADP + phosphate + 2 H(+). It functions in the pathway pyrimidine metabolism; CTP biosynthesis via de novo pathway; CTP from UDP: step 2/2. Allosterically activated by GTP, when glutamine is the substrate; GTP has no effect on the reaction when ammonia is the substrate. The allosteric effector GTP functions by stabilizing the protein conformation that binds the tetrahedral intermediate(s) formed during glutamine hydrolysis. Inhibited by the product CTP, via allosteric rather than competitive inhibition. Functionally, catalyzes the ATP-dependent amination of UTP to CTP with either L-glutamine or ammonia as the source of nitrogen. Regulates intracellular CTP levels through interactions with the four ribonucleotide triphosphates. This Cupriavidus necator (strain ATCC 17699 / DSM 428 / KCTC 22496 / NCIMB 10442 / H16 / Stanier 337) (Ralstonia eutropha) protein is CTP synthase.